The sequence spans 478 residues: MADPIMHLQVVILSLILHLADSVADSVNVDGVAGLSITLPCRYNGAITSMCWNRGTCSVFSCPDGIVWTNGTHVTYRKETRYKLLGNLSRRDVSLTIANTAVSDSGIYCCRVKHSGWFNDMKITISLKIGPPRVTIPIVRTVRTSTTVPTTTTTTLPTTTTLPTTTTLPTTMTLPTTTTLPMTTTLPTTTTVPMTTTLPTTLPTTTTLPTTLPTTTTLPTTLPTTTTLPTTMTLPMTTTLPTTTTLPTTTTLPTTTTLPTTTTLPTTTLPTMTLPTTTTLPTTMTLPMTTTLPTTTTLPTTTTLPTTTMVSTFVPPTPLPMQDHEPVATSPSSAQPAETHPVTLLGATRTQPTSSPLYSYTTDGSDTVTESSDGLWNNNQTQLSPEHSPQMVNTTEGIYAGVCISVLVLLAVLGVVIAKKYFFKKEIQQLSVSFSNHQFKTLQNAVKKEVHAEDNIYIENNLYAMNQDPVVLFESLRP.

Residues 1-24 form the signal peptide; the sequence is MADPIMHLQVVILSLILHLADSVA. The Ig-like V-type domain occupies 25–126; the sequence is DSVNVDGVAG…WFNDMKITIS (102 aa). At 25 to 397 the chain is on the extracellular side; it reads DSVNVDGVAG…SPQMVNTTEG (373 aa). Cystine bridges form between Cys-41/Cys-110, Cys-51/Cys-62, and Cys-57/Cys-109. Residues Asn-70 and Asn-87 are each glycosylated (N-linked (GlcNAc...) asparagine). 28 tandem repeats follow at residues 148-155, 156-161, 162-167, 168-173, 174-179, 180-185, 186-191, 192-197, 198-201, 202-207, 208-211, 212-217, 218-221, 222-227, 228-233, 234-239, 240-245, 246-251, 252-257, 258-263, 264-268, 269-273, 274-279, 280-285, 286-291, 292-297, 298-303, and 304-309. Residues 148–309 form a 28 X 6 AA approximate tandem repeats of L-P-[MT]-T-[MT]-T region; the sequence is VPTTTTTTLP…TTTTLPTTTM (162 aa). The segment at 187 to 303 is disordered; the sequence is PTTTTVPMTT…TTTTLPTTTT (117 aa). Disordered stretches follow at residues 320 to 339 and 344 to 370; these read PMQDHEPVATSPSSAQPAET and LLGATRTQPTSSPLYSYTTDGSDTVTE. Residues 348–370 are compositionally biased toward polar residues; it reads TRTQPTSSPLYSYTTDGSDTVTE. Residues Asn-379 and Asn-393 are each glycosylated (N-linked (GlcNAc...) asparagine). The helical transmembrane segment at 398-418 threads the bilayer; sequence IYAGVCISVLVLLAVLGVVIA. The Cytoplasmic segment spans residues 419–478; sequence KKYFFKKEIQQLSVSFSNHQFKTLQNAVKKEVHAEDNIYIENNLYAMNQDPVVLFESLRP.

Belongs to the immunoglobulin superfamily. TIM family. Interacts with STAM. Interacts with SELPLG.

Its subcellular location is the cell membrane. Phosphatidylserine receptor that plays an important functional role in regulatory B-cells homeostasis including generation, expansion and suppressor functions. As P-selectin/SELPLG ligand, plays a specialized role in activated but not naive T-cell trafficking during inflammatory responses. Controls thereby T-cell accumulation in the inflamed central nervous system (CNS) and the induction of autoimmune disease. Also regulates expression of various anti-inflammatory cytokines and co-inhibitory ligands including IL10. Acts as a regulator of T-cell proliferation. May play a role in kidney injury and repair. This is Hepatitis A virus cellular receptor 1 (HAVCR1) from Chlorocebus aethiops (Green monkey).